Here is a 167-residue protein sequence, read N- to C-terminus: Leptin (167 aa).

An N-terminal signal peptide occupies residues 1–21 (MRCGPLCRFLWLWPYLSCVEA). Cysteine 117 and cysteine 167 are joined by a disulfide.

Belongs to the leptin family.

The protein localises to the secreted. Key player in the regulation of energy balance and body weight control. Once released into the circulation, has central and peripheral effects by binding LEPR, found in many tissues, which results in the activation of several major signaling pathways. In the hypothalamus, acts as an appetite-regulating factor that induces a decrease in food intake and an increase in energy consumption by inducing anorexinogenic factors and suppressing orexigenic neuropeptides, also regulates bone mass and secretion of hypothalamo-pituitary-adrenal hormones. In the periphery, increases basal metabolism, influences reproductive function, regulates pancreatic beta-cell function and insulin secretion, is pro-angiogenic for endothelial cell and affects innate and adaptive immunity. In the arcuate nucleus of the hypothalamus, activates by depolarization POMC neurons inducing FOS and SOCS3 expression to release anorexigenic peptides and inhibits by hyperpolarization NPY neurons inducing SOCS3 with a consequent reduction on release of orexigenic peptides. In addition to its known satiety inducing effect, has a modulatory role in nutrient absorption. In the intestine, reduces glucose absorption by enterocytes by activating PKC and leading to a sequential activation of p38, PI3K and ERK signaling pathways which exerts an inhibitory effect on glucose absorption. Acts as a growth factor on certain tissues, through the activation of different signaling pathways increases expression of genes involved in cell cycle regulation such as CCND1, via JAK2-STAT3 pathway, or VEGFA, via MAPK1/3 and PI3K-AKT1 pathways. May also play an apoptotic role via JAK2-STAT3 pathway and up-regulation of BIRC5 expression. Pro-angiogenic, has mitogenic activity on vascular endothelial cells and plays a role in matrix remodeling by regulating the expression of matrix metalloproteinases (MMPs) and tissue inhibitors of metalloproteinases (TIMPs). In innate immunity, modulates the activity and function of neutrophils by increasing chemotaxis and the secretion of oxygen radicals. Increases phagocytosis by macrophages and enhances secretion of pro-inflammatory mediators. Increases cytotoxic ability of NK cells. Plays a pro-inflammatory role, in synergy with IL1B, by inducing NOS2 which promotes the production of IL6, IL8 and Prostaglandin E2, through a signaling pathway that involves JAK2, PI3K, MAP2K1/MEK1 and MAPK14/p38. In adaptive immunity, promotes the switch of memory T-cells towards T helper-1 cell immune responses. Increases CD4(+)CD25(-) T-cell proliferation and reduces autophagy during TCR (T-cell receptor) stimulation, through MTOR signaling pathway activation and BCL2 up-regulation. The protein is Leptin (LEP) of Canis lupus familiaris (Dog).